We begin with the raw amino-acid sequence, 465 residues long: Argininosuccinate lyase (465 aa).

It belongs to the lyase 1 family. Argininosuccinate lyase subfamily.

Its subcellular location is the cytoplasm. The enzyme catalyses 2-(N(omega)-L-arginino)succinate = fumarate + L-arginine. Its pathway is amino-acid biosynthesis; L-arginine biosynthesis; L-arginine from L-ornithine and carbamoyl phosphate: step 3/3. In Rhodopseudomonas palustris (strain ATCC BAA-98 / CGA009), this protein is Argininosuccinate lyase.